A 623-amino-acid chain; its full sequence is ATPase expression protein 3 (623 aa).

5 PPR repeats span residues 217–251 (SVQC…GCKP), 252–292 (NTTT…NGIF), 362–396 (NLKF…QLKF), 405–439 (NSET…LVGP), and 445–479 (NVNT…SERY).

It localises to the mitochondrion inner membrane. In terms of biological role, required for respiration. The polypeptide is ATPase expression protein 3 (AEP3) (Candida glabrata (strain ATCC 2001 / BCRC 20586 / JCM 3761 / NBRC 0622 / NRRL Y-65 / CBS 138) (Yeast)).